We begin with the raw amino-acid sequence, 108 residues long: Nucleoid-associated protein BAV0915 (108 aa).

The protein belongs to the YbaB/EbfC family. Homodimer.

It is found in the cytoplasm. It localises to the nucleoid. Functionally, binds to DNA and alters its conformation. May be involved in regulation of gene expression, nucleoid organization and DNA protection. The chain is Nucleoid-associated protein BAV0915 from Bordetella avium (strain 197N).